Reading from the N-terminus, the 68-residue chain is MAMTNEEKVLAIREKLNIVNQGLLDPEKYKNANEEELTDIYDFVQSRERLSPSEVTAIADALGQLRHE.

This sequence belongs to the UPF0435 family.

The polypeptide is UPF0435 protein SAOUHSC_02093 (Staphylococcus aureus (strain NCTC 8325 / PS 47)).